We begin with the raw amino-acid sequence, 77 residues long: Large ribosomal subunit protein eL20 (77 aa).

It belongs to the eukaryotic ribosomal protein eL20 family. In terms of assembly, part of the 50S ribosomal subunit. Binds 23S rRNA.

The protein is Large ribosomal subunit protein eL20 of Thermococcus kodakarensis (strain ATCC BAA-918 / JCM 12380 / KOD1) (Pyrococcus kodakaraensis (strain KOD1)).